The chain runs to 449 residues: Glucose-6-phosphate isomerase (449 aa).

A Phosphothreonine modification is found at T38. E290 acts as the Proton donor in catalysis. Residues H311 and K425 contribute to the active site.

The protein belongs to the GPI family.

The protein localises to the cytoplasm. It carries out the reaction alpha-D-glucose 6-phosphate = beta-D-fructose 6-phosphate. Its pathway is carbohydrate biosynthesis; gluconeogenesis. It functions in the pathway carbohydrate degradation; glycolysis; D-glyceraldehyde 3-phosphate and glycerone phosphate from D-glucose: step 2/4. In terms of biological role, catalyzes the reversible isomerization of glucose-6-phosphate to fructose-6-phosphate. This Geobacillus thermodenitrificans (strain NG80-2) protein is Glucose-6-phosphate isomerase.